A 300-amino-acid polypeptide reads, in one-letter code: Bifunctional protein FolD (300 aa).

NADP(+) contacts are provided by residues 172 to 174, serine 206, and isoleucine 247; that span reads GRS.

It belongs to the tetrahydrofolate dehydrogenase/cyclohydrolase family. Homodimer.

The catalysed reaction is (6R)-5,10-methylene-5,6,7,8-tetrahydrofolate + NADP(+) = (6R)-5,10-methenyltetrahydrofolate + NADPH. It catalyses the reaction (6R)-5,10-methenyltetrahydrofolate + H2O = (6R)-10-formyltetrahydrofolate + H(+). The protein operates within one-carbon metabolism; tetrahydrofolate interconversion. Its function is as follows. Catalyzes the oxidation of 5,10-methylenetetrahydrofolate to 5,10-methenyltetrahydrofolate and then the hydrolysis of 5,10-methenyltetrahydrofolate to 10-formyltetrahydrofolate. This chain is Bifunctional protein FolD, found in Rhodopirellula baltica (strain DSM 10527 / NCIMB 13988 / SH1).